Consider the following 136-residue polypeptide: Phospholipase A2 (136 aa).

Ca(2+)-binding residues include Trp-8, Gly-10, and Gly-12. 5 cysteine pairs are disulfide-bonded: Cys-9–Cys-31, Cys-30–Cys-70, Cys-37–Cys-63, Cys-61–Cys-95, and Cys-105–Cys-115. Asn-16 carries N-linked (GlcNAc...) asparagine glycosylation. Residue His-34 is part of the active site. A Ca(2+)-binding site is contributed by Asp-35. Residue Asp-64 is part of the active site.

The protein belongs to the phospholipase A2 family. Requires Ca(2+) as cofactor. As to expression, expressed by the venom gland.

It is found in the secreted. The catalysed reaction is a 1,2-diacyl-sn-glycero-3-phosphocholine + H2O = a 1-acyl-sn-glycero-3-phosphocholine + a fatty acid + H(+). PLA2 catalyzes the calcium-dependent hydrolysis of the 2-acyl groups in 3-sn-phosphoglycerides. This Bombus pensylvanicus (American bumblebee) protein is Phospholipase A2.